The chain runs to 220 residues: Sec-independent protein translocase protein TatB (220 aa).

Residues 1–21 form a helical membrane-spanning segment; that stretch reads MFDIGFSELLLVLVIGLVVLG. The tract at residues 190 to 220 is disordered; sequence VTKQQIDTIDSHGTDLSSAGPSRIHQPGGDQ.

It belongs to the TatB family. As to quaternary structure, the Tat system comprises two distinct complexes: a TatABC complex, containing multiple copies of TatA, TatB and TatC subunits, and a separate TatA complex, containing only TatA subunits. Substrates initially bind to the TatABC complex, which probably triggers association of the separate TatA complex to form the active translocon.

It is found in the cell inner membrane. Functionally, part of the twin-arginine translocation (Tat) system that transports large folded proteins containing a characteristic twin-arginine motif in their signal peptide across membranes. Together with TatC, TatB is part of a receptor directly interacting with Tat signal peptides. TatB may form an oligomeric binding site that transiently accommodates folded Tat precursor proteins before their translocation. This is Sec-independent protein translocase protein TatB from Yersinia pseudotuberculosis serotype I (strain IP32953).